The following is a 140-amino-acid chain: Pre-mRNA-splicing factor NTC20 (140 aa).

Ser-139 is subject to Phosphoserine.

As to quaternary structure, belongs to the NTC complex (or PRP19-associated complex), composed of at least CEF1, CLF1, ISY1, NTC20, SNT309, SYF1, SYF2, and PRP19. The NTC complex associates with the spliceosome after the release of the U1 and U4 snRNAs and forms the CWC spliceosome subcomplex (or CEF1-associated complex) reminiscent of a late-stage spliceosome composed also of the U2, U5 and U6 snRNAs and at least BUD13, BRR2, CDC40, CUS1, CWC2, CWC15, CWC21, CWC22, CWC23, CWC24, CWC25, CWC27, ECM2, HSH155, IST3, LEA1, MSL1, PRP8, PRP9, PRP11, PRP21, PRP22, PRP45, PRP46, SLU7, SMB1, SMD1, SMD2, SMD3, SMX2, SMX3, SNU114, SPP2, RSE1 and YJU2. Interacts with CEF1, CLF1, ISY1, PRP46, and SYF1.

The protein resides in the nucleus. Its function is as follows. Involved in pre-mRNA splicing. As a component of the NTC complex, associates to the spliceosome to mediate conformational rearrangement or to stabilize the structure of the spliceosome after U4 snRNA dissociation, which leads to spliceosome maturation. The polypeptide is Pre-mRNA-splicing factor NTC20 (NTC20) (Saccharomyces cerevisiae (strain ATCC 204508 / S288c) (Baker's yeast)).